Consider the following 114-residue polypeptide: MSDDVALPLEFTDAAANKVKSLIADEDNPNLKLRVYITGGGCSGFQYGFTFDDQVNEGDMTIEKQGVGLVVDPMSLQYLVGGSVDYTEGLEGSRFIVTNPNAKSTCGCGSSFSI.

Cysteine 42, cysteine 106, and cysteine 108 together coordinate iron-sulfur cluster.

Belongs to the HesB/IscA family. Homodimer. Iron-sulfur cluster is required as a cofactor.

Functionally, required for insertion of 4Fe-4S clusters for at least IspG. The chain is Iron-sulfur cluster insertion protein ErpA from Shigella boydii serotype 18 (strain CDC 3083-94 / BS512).